The chain runs to 409 residues: MAAEMALVKPISKFSSPKLSNPSKFLSGRRFSTVIRMSASSSPPPPTTATSKSKKGTKKEIQESLLTPRFYTTDFEEMEQLFNTEINKNLNEAEFEALLQEFKTDYNQTHFVRNKEFKEAADKLQGPLRQIFVEFLERSCTAEFSGFLLYKELGRRLKKTNPVVAEIFSLMSRDEARHAGFLNKGLSDFNLALDLGFLTKARKYTFFKPKFIFYATYLSEKIGYWRYITIYRHLKENPEFQCYPIFKYFENWCQDENRHGDFFSALMKAQPQFLNDWQAKLWSRFFCLSVYVTMYLNDCQRTNFYEGIGLNTKEFDMHVIIETNRTTARIFPAVLDVENPEFKRKLDRMVVSYEKLLAIGETDDASFIKTLKRIPLVTSLASEILAAYLMPPVESGSVDFAEFEPNLVY.

2 disordered regions span residues 1–23 (MAAE…SNPS) and 36–60 (RMSA…TKKE). A chloroplast-targeting transit peptide spans 1–36 (MAAEMALVKPISKFSSPKLSNPSKFLSGRRFSTVIR). A compositionally biased stretch (polar residues) spans 13 to 23 (KFSSPKLSNPS).

This sequence belongs to the AcsF family. As to quaternary structure, part of the FLU-containing chloroplast membrane complex composed of FLU, CRD1, PORB, PORC, CHLP and HEMA1. Interacts with YCF54 in chloroplasts. Fe cation is required as a cofactor.

Its subcellular location is the plastid. The protein localises to the chloroplast inner membrane. It localises to the chloroplast thylakoid membrane. It catalyses the reaction Mg-protoporphyrin IX 13-monomethyl ester + 3 NADPH + 3 O2 + 2 H(+) = 3,8-divinyl protochlorophyllide a + 3 NADP(+) + 5 H2O. Its pathway is porphyrin-containing compound metabolism; chlorophyll biosynthesis. Its function is as follows. Catalytic component of the MgProto monomethylester (MgProtoME) cyclase complex that catalyzes the formation of the isocyclic ring in chlorophyll biosynthesis. Mediates the cyclase reaction, which results in the formation of divinylprotochlorophyllide (Pchlide) characteristic of all chlorophylls from magnesium-protoporphyrin IX 13-monomethyl ester (MgPMME). The polypeptide is Magnesium-protoporphyrin IX monomethyl ester [oxidative] cyclase, chloroplastic (Arabidopsis thaliana (Mouse-ear cress)).